Reading from the N-terminus, the 276-residue chain is 2-dehydro-3-deoxyphosphooctonate aldolase (276 aa).

The protein belongs to the KdsA family.

The protein resides in the cytoplasm. It carries out the reaction D-arabinose 5-phosphate + phosphoenolpyruvate + H2O = 3-deoxy-alpha-D-manno-2-octulosonate-8-phosphate + phosphate. It functions in the pathway carbohydrate biosynthesis; 3-deoxy-D-manno-octulosonate biosynthesis; 3-deoxy-D-manno-octulosonate from D-ribulose 5-phosphate: step 2/3. It participates in bacterial outer membrane biogenesis; lipopolysaccharide biosynthesis. The chain is 2-dehydro-3-deoxyphosphooctonate aldolase from Xanthomonas axonopodis pv. citri (strain 306).